A 557-amino-acid chain; its full sequence is GMP synthase [glutamine-hydrolyzing] (557 aa).

The Glutamine amidotransferase type-1 domain occupies 13 to 209 (TILTLDFGSQ…AVDICGANPN (197 aa)). The active-site Nucleophile is cysteine 89. Residues histidine 183 and glutamate 185 contribute to the active site. Residues 210 to 414 (WTMSKFVDQE…LGIAHELVMR (205 aa)) enclose the GMPS ATP-PPase domain. 238–244 (SGGVDST) provides a ligand contact to ATP. XMP-binding residues include arginine 311, aspartate 476, lysine 549, and glutamate 555.

Homodimer. Mg(2+) serves as cofactor.

It localises to the cytoplasm. It is found in the cytosol. The catalysed reaction is XMP + L-glutamine + ATP + H2O = GMP + L-glutamate + AMP + diphosphate + 2 H(+). Its pathway is purine metabolism; GMP biosynthesis; GMP from XMP (L-Gln route): step 1/1. Inhibited by 6-diazo-5-oxo-l-norleucine (DON) and acivicin (ACI). Its function is as follows. Catalyzes the conversion of xanthine monophosphate (XMP) to GMP in the presence of glutamine and ATP through an adenyl-XMP intermediate. This is GMP synthase [glutamine-hydrolyzing] (gua1) from Aspergillus fumigatus (strain ATCC MYA-4609 / CBS 101355 / FGSC A1100 / Af293) (Neosartorya fumigata).